Here is a 145-residue protein sequence, read N- to C-terminus: uncharacterized protein (145 aa).

A helical transmembrane segment spans residues 1–21; it reads MWFLVKATFWFSLVLVLLPFL. The interval 109-145 is disordered; that stretch reads TPAESVPSAEATEKAEPAFKRMPVPEHRLDPGPASGK. The segment covering 119–138 has biased composition (basic and acidic residues); that stretch reads ATEKAEPAFKRMPVPEHRLD.

The protein resides in the membrane. This is an uncharacterized protein from Rhizobium meliloti (strain 1021) (Ensifer meliloti).